The sequence spans 302 residues: Putative S-adenosyl-L-methionine-dependent methyltransferase MMAR_1068 (302 aa).

S-adenosyl-L-methionine is bound by residues Asp-127 and 156-157 (DL).

The protein belongs to the UPF0677 family.

In terms of biological role, exhibits S-adenosyl-L-methionine-dependent methyltransferase activity. The protein is Putative S-adenosyl-L-methionine-dependent methyltransferase MMAR_1068 of Mycobacterium marinum (strain ATCC BAA-535 / M).